The chain runs to 207 residues: Ribosome maturation factor RimM (207 aa).

Positions 130-207 (EDEFYWVDLI…RIVVDWGLDY (78 aa)) constitute a PRC barrel domain.

This sequence belongs to the RimM family. Binds ribosomal protein uS19.

Its subcellular location is the cytoplasm. In terms of biological role, an accessory protein needed during the final step in the assembly of 30S ribosomal subunit, possibly for assembly of the head region. Essential for efficient processing of 16S rRNA. May be needed both before and after RbfA during the maturation of 16S rRNA. It has affinity for free ribosomal 30S subunits but not for 70S ribosomes. The polypeptide is Ribosome maturation factor RimM (Cupriavidus taiwanensis (strain DSM 17343 / BCRC 17206 / CCUG 44338 / CIP 107171 / LMG 19424 / R1) (Ralstonia taiwanensis (strain LMG 19424))).